A 218-amino-acid polypeptide reads, in one-letter code: uncharacterized protein (218 aa).

2 helical membrane passes run 8–28 (LAVF…ATAG) and 158–178 (ILFY…FLLI).

The protein localises to the cell membrane. This is an uncharacterized protein from Mycoplasma genitalium (strain ATCC 33530 / DSM 19775 / NCTC 10195 / G37) (Mycoplasmoides genitalium).